The following is a 373-amino-acid chain: Enoyl-[acyl-carrier-protein] reductase, mitochondrial (373 aa).

A mitochondrion-targeting transit peptide spans 1 to 53; the sequence is MLVSRRLTGARARAPLLASLLEAWCRQGRTTSSYSAFSEPSHVRALVYGNHGD. Residue lysine 61 is modified to N6-acetyllysine; alternate. At lysine 61 the chain carries N6-succinyllysine; alternate. The active-site Proton donor is tyrosine 94. NADP(+)-binding positions include asparagine 167, 193 to 196, and 216 to 218; these read NSGV and RDR. Residues lysine 252 and lysine 267 each carry the N6-acetyllysine; alternate modification. Residues lysine 252 and lysine 267 each carry the N6-succinyllysine; alternate modification. NADP(+) contacts are provided by residues 285–288 and 310–312; these read YGGM and FWL. Residue lysine 316 is modified to N6-succinyllysine. Residue lysine 368 participates in NADP(+) binding.

Belongs to the zinc-containing alcohol dehydrogenase family. Quinone oxidoreductase subfamily. In terms of assembly, homodimer. Interacts with PPARA in the nucleus and increases its activity.

The protein localises to the mitochondrion. It is found in the cytoplasm. Its subcellular location is the nucleus. It carries out the reaction a 2,3-saturated acyl-[ACP] + NADP(+) = a (2E)-enoyl-[ACP] + NADPH + H(+). The catalysed reaction is (2E)-butenoyl-[ACP] + NADPH + H(+) = butanoyl-[ACP] + NADP(+). The enzyme catalyses (2E)-hexenoyl-[ACP] + NADPH + H(+) = hexanoyl-[ACP] + NADP(+). It catalyses the reaction (2E)-octenoyl-[ACP] + NADPH + H(+) = octanoyl-[ACP] + NADP(+). It carries out the reaction (2E)-decenoyl-[ACP] + NADPH + H(+) = decanoyl-[ACP] + NADP(+). The catalysed reaction is (2E)-dodecenoyl-[ACP] + NADPH + H(+) = dodecanoyl-[ACP] + NADP(+). The enzyme catalyses (2E)-tetradecenoyl-[ACP] + NADPH + H(+) = tetradecanoyl-[ACP] + NADP(+). It catalyses the reaction (2E)-hexadecenoyl-[ACP] + NADPH + H(+) = hexadecanoyl-[ACP] + NADP(+). Catalyzes the NADPH-dependent reduction of trans-2-enoyl thioesters in mitochondrial fatty acid synthesis (fatty acid synthesis type II). Fatty acid chain elongation in mitochondria uses acyl carrier protein (ACP) as an acyl group carrier, but the enzyme accepts both ACP and CoA thioesters as substrates in vitro. Displays a preference for medium-chain over short- and long-chain substrates. May provide the octanoyl chain used for lipoic acid biosynthesis, regulating protein lipoylation and mitochondrial respiratory activity particularly in Purkinje cells. Involved in iron homeostasis; affecting Fe-S cluster assembly and ceramide metabolism. Required for proper morphology and bioenergetic functions of mitochondria. Required for maintenance of neurons. The protein is Enoyl-[acyl-carrier-protein] reductase, mitochondrial (Mecr) of Rattus norvegicus (Rat).